Reading from the N-terminus, the 264-residue chain is Thiamine pyrophosphokinase 1 (264 aa).

Over residues 1–12 (MPLPTMTHSSSF) the composition is skewed to polar residues. The interval 1-27 (MPLPTMTHSSSFLRLPATSSPHPPPAD) is disordered.

Belongs to the thiamine pyrophosphokinase family.

It localises to the cytoplasm. The protein resides in the cytosol. The enzyme catalyses thiamine + ATP = thiamine diphosphate + AMP + H(+). The protein operates within cofactor biosynthesis; thiamine diphosphate biosynthesis; thiamine diphosphate from thiamine: step 1/1. Its function is as follows. Catalyzes the phosphorylation of thiamine to thiamine pyrophosphate (TPP). TPP is an active cofactor for enzymes involved in glycolysis and energy production. Plant leaves require high levels of TPP for photosynthesis and carbohydrate metabolism. This chain is Thiamine pyrophosphokinase 1 (TPK1), found in Oryza sativa subsp. japonica (Rice).